Reading from the N-terminus, the 427-residue chain is Glutamate-1-semialdehyde 2,1-aminomutase (427 aa).

Lysine 265 carries the N6-(pyridoxal phosphate)lysine modification.

This sequence belongs to the class-III pyridoxal-phosphate-dependent aminotransferase family. HemL subfamily. Homodimer. Pyridoxal 5'-phosphate serves as cofactor.

It localises to the cytoplasm. It catalyses the reaction (S)-4-amino-5-oxopentanoate = 5-aminolevulinate. Its pathway is porphyrin-containing compound metabolism; protoporphyrin-IX biosynthesis; 5-aminolevulinate from L-glutamyl-tRNA(Glu): step 2/2. The polypeptide is Glutamate-1-semialdehyde 2,1-aminomutase (Pseudomonas fluorescens (strain Pf0-1)).